A 264-amino-acid chain; its full sequence is Thymidylate synthase (264 aa).

R21 is a binding site for dUMP. Position 51 (H51) interacts with (6R)-5,10-methylene-5,6,7,8-tetrahydrofolate. Position 126–127 (R126–R127) interacts with dUMP. The Nucleophile role is filled by C146. DUMP contacts are provided by residues R166–D169, N177, and H207–Y209. D169 lines the (6R)-5,10-methylene-5,6,7,8-tetrahydrofolate pocket. A263 contributes to the (6R)-5,10-methylene-5,6,7,8-tetrahydrofolate binding site.

Belongs to the thymidylate synthase family. Bacterial-type ThyA subfamily. In terms of assembly, homodimer.

It is found in the cytoplasm. It carries out the reaction dUMP + (6R)-5,10-methylene-5,6,7,8-tetrahydrofolate = 7,8-dihydrofolate + dTMP. It functions in the pathway pyrimidine metabolism; dTTP biosynthesis. In terms of biological role, catalyzes the reductive methylation of 2'-deoxyuridine-5'-monophosphate (dUMP) to 2'-deoxythymidine-5'-monophosphate (dTMP) while utilizing 5,10-methylenetetrahydrofolate (mTHF) as the methyl donor and reductant in the reaction, yielding dihydrofolate (DHF) as a by-product. This enzymatic reaction provides an intracellular de novo source of dTMP, an essential precursor for DNA biosynthesis. The sequence is that of Thymidylate synthase from Paramagnetospirillum magneticum (strain ATCC 700264 / AMB-1) (Magnetospirillum magneticum).